Consider the following 230-residue polypeptide: MENQPKLNSSKEIIAFLAERFPKCFIAEGEARPLKVGIFQDLVEHLKDETQLSKTQLRSALRLYTSSWRYLYGVKEGAKRVDLNGNDCGELEAEHIAHARTQLAEAKARVQAQRAEQRAKKREAEGDKETSKRPAAKKPNPRRQAPKDGEKRQPRPQKQANQAPRKAPRQNTEKLTPVKDISVLTVGQSLKVNVGSSVMDATVLEIAKEGVRVQLPNGLAMNVRTEHLKF.

Residues 104-176 (AEAKARVQAQ…APRQNTEKLT (73 aa)) are disordered. Over residues 115–132 (AEQRAKKREAEGDKETSK) the composition is skewed to basic and acidic residues.

It belongs to the ProQ family.

It is found in the cytoplasm. Functionally, RNA chaperone with significant RNA binding, RNA strand exchange and RNA duplexing activities. May regulate ProP activity through an RNA-based, post-transcriptional mechanism. In Proteus mirabilis (strain HI4320), this protein is RNA chaperone ProQ.